We begin with the raw amino-acid sequence, 148 residues long: uncharacterized protein (148 aa).

The N-terminal stretch at 1–20 is a signal peptide; the sequence is MNLTKLLPAFAAAVVLSACA.

This is an uncharacterized protein from Haemophilus influenzae (strain ATCC 51907 / DSM 11121 / KW20 / Rd).